The following is an 87-amino-acid chain: Small ribosomal subunit protein bS20 (87 aa).

Residues 1–22 form a disordered region; sequence MANIKSQIKRNKTNEKARLRNQ.

This sequence belongs to the bacterial ribosomal protein bS20 family.

Functionally, binds directly to 16S ribosomal RNA. The sequence is that of Small ribosomal subunit protein bS20 from Corynebacterium glutamicum (strain R).